Reading from the N-terminus, the 67-residue chain is Large ribosomal subunit protein uL29 (67 aa).

This sequence belongs to the universal ribosomal protein uL29 family.

In Clostridium acetobutylicum (strain ATCC 824 / DSM 792 / JCM 1419 / IAM 19013 / LMG 5710 / NBRC 13948 / NRRL B-527 / VKM B-1787 / 2291 / W), this protein is Large ribosomal subunit protein uL29.